Consider the following 304-residue polypeptide: N-acetyllactosaminide alpha-2,3-sialyltransferase (304 aa).

CMP-N-acetyl-beta-neuraminate is bound by residues 221–225, 242–243, and 262–263; these read FPHPA, FE, and SS. The active-site Proton donor is the histidine 223.

Belongs to the glycosyltransferase 52 family.

The enzyme catalyses a beta-D-galactosyl-(1-&gt;4)-N-acetyl-beta-D-glucosaminyl derivative + CMP-N-acetyl-beta-neuraminate = an N-acetyl-alpha-neuraminyl-(2-&gt;3)-beta-D-galactosyl-(1-&gt;4)-N-acetyl-beta-D-glucosaminyl derivative + CMP + H(+). It participates in bacterial outer membrane biogenesis; lipooligosaccharide biosynthesis. Catalyzes the transfer of sialic acid from the substrate CMP-N-acetylneuraminate to the terminal galactose residue of the N-acetyllactosamine moiety of surface lipooligosaccharide (LOS). Thus, functions in the sialylation of LOS, which plays a role in the evasion of the host immune response. This Haemophilus influenzae (strain ATCC 51907 / DSM 11121 / KW20 / Rd) protein is N-acetyllactosaminide alpha-2,3-sialyltransferase.